We begin with the raw amino-acid sequence, 293 residues long: Movement protein BC1 (293 aa).

The tract at residues 207–228 (SWASRSTIGPSPSYAGSDQGDA) is disordered. Polar residues predominate over residues 209-222 (ASRSTIGPSPSYAG).

Belongs to the begomovirus movement protein BC1 family. As to quaternary structure, binds to dimeric supercoiled plasmid DNA. In terms of processing, phosphorylated.

It is found in the host cell membrane. Its subcellular location is the host microsome membrane. It localises to the host endoplasmic reticulum membrane. Its function is as follows. Movement protein involved in the cell-to-cell and systemic transport of viral genomic DNA. Begomoviruses use 2 proteins to transport their DNA from cell to cell. The nuclear shuttle protein (NSP) shuttles it between nucleus and cytoplasm and the movement protein (MP) probably transports the DNA-NSP complex to the cell periphery and facilitates further movement across the cell wall. In Tomato golden mosaic virus (strain Yellow vein) (TGMV), this protein is Movement protein BC1.